Consider the following 314-residue polypeptide: MKKIAFIGECMIELNGKPFAEMWQSYGGDTLNSATYLSRVSSSKEIQVHYVSALGTDNLSKQMLKYWQADGIQTNWVLQDEQHQPGLYLIQLDAQGERTFLYWRNQSAARYMVQHPDFAKVIAELQQVDVIYLSGISLAILPKNDRTFLIEQLSSLAKKGTEIVFDSNYRPKLWDSLEEAQDCYLQLLPSVNIALVTFDDEQALWKDKTSRDTLERLHKIGIPKVIVKCGKNGAIFSDRYLSQYGQVIPEPILNVVDTTSAGDSFNAGFLNGYLRNKSLEICCQQGNRIAGIVIQHKGAIIDKVAISHLQSEFN.

Substrate contacts are provided by residues 28-32 (GDTLN), tyrosine 88, 102-104 (YWR), and arginine 170. Residues 168-170 (NYR), 228-233 (KCGKNG), and 260-263 (SAGD) each bind ATP. Aspartate 263 contributes to the substrate binding site. Aspartate 263 (proton acceptor) is an active-site residue.

This sequence belongs to the carbohydrate kinase PfkB family.

It carries out the reaction 2-dehydro-3-deoxy-D-gluconate + ATP = 2-dehydro-3-deoxy-6-phospho-D-gluconate + ADP + H(+). The protein operates within carbohydrate acid metabolism; 2-dehydro-3-deoxy-D-gluconate degradation; D-glyceraldehyde 3-phosphate and pyruvate from 2-dehydro-3-deoxy-D-gluconate: step 1/2. Its function is as follows. Catalyzes the phosphorylation of 2-keto-3-deoxygluconate (KDG) to produce 2-keto-3-deoxy-6-phosphogluconate (KDPG). The chain is 2-dehydro-3-deoxygluconokinase (kdgK) from Haemophilus influenzae (strain ATCC 51907 / DSM 11121 / KW20 / Rd).